A 73-amino-acid chain; its full sequence is Large ribosomal subunit protein bL28 (73 aa).

This sequence belongs to the bacterial ribosomal protein bL28 family.

The sequence is that of Large ribosomal subunit protein bL28 from Fervidobacterium nodosum (strain ATCC 35602 / DSM 5306 / Rt17-B1).